Here is a 293-residue protein sequence, read N- to C-terminus: MSTTAAPEVELVETETPMGELALRVAVRGCRSVAAHQYHRGALRILRPHYLDDSGQVCYVVVNPGGAYLGADLYVIDVEVGDGAKLLLTTQSATKIYRTPGSFAEQRVCLRLGEGAQLELAPDQLIAYREASYRQNTRITVRPSSSLVMAEVVTPGWSPDGASFRYEELRLRNEIQVETPGGTGLLALDNLLIRPPLNDVTGMGFMEGYSHLGSLVVVDARVEQALADEFHALTAGHDACTGVSLTASVGGTTGLVLRSLSNSTEELNRLLGACTALLRERWYGQSPLNLRKY.

This sequence belongs to the UreD family. UreD, UreF and UreG form a complex that acts as a GTP-hydrolysis-dependent molecular chaperone, activating the urease apoprotein by helping to assemble the nickel containing metallocenter of UreC. The UreE protein probably delivers the nickel.

The protein localises to the cytoplasm. Functionally, required for maturation of urease via the functional incorporation of the urease nickel metallocenter. This Arthrobacter sp. (strain FB24) protein is Urease accessory protein UreD.